Consider the following 465-residue polypeptide: D-arabinitol 4-dehydrogenase (465 aa).

Belongs to the mannitol dehydrogenase family.

The enzyme catalyses D-arabinitol + NAD(+) = D-xylulose + NADH + H(+). Its pathway is carbohydrate metabolism; D-arabinitol metabolism. The protein is D-arabinitol 4-dehydrogenase (dalD) of Ralstonia nicotianae (strain ATCC BAA-1114 / GMI1000) (Ralstonia solanacearum).